The following is a 252-amino-acid chain: MRKKFVAGNWKMNKDLLGAVSLATEILQLLGDEAPTCEVAIAPTFLCQQAVFQVIDESAIKLAAQNCFYEDQGAYTGEISAAMLRNSGCEYVILGHSERRQYFNETDEIVNKKVKNALSVELDVIMCVGETLEQRESGVTKSVVETQVRGGLKDLTAEDMKSVVIAYEPVWAIGTGKTATPEQAQEVHAFIRGIVKDMFGEEVANELRIQYGGSVKTSNAKELFGMPDIDGGLIGGASLNAEDFVEIIKSAE.

Asn-9–Lys-11 serves as a coordination point for substrate. His-96 (electrophile) is an active-site residue. The Proton acceptor role is filled by Glu-168. Substrate is bound by residues Gly-174, Ser-214, and Gly-235–Gly-236.

Belongs to the triosephosphate isomerase family. As to quaternary structure, homodimer.

The protein resides in the cytoplasm. The enzyme catalyses D-glyceraldehyde 3-phosphate = dihydroxyacetone phosphate. It participates in carbohydrate biosynthesis; gluconeogenesis. Its pathway is carbohydrate degradation; glycolysis; D-glyceraldehyde 3-phosphate from glycerone phosphate: step 1/1. In terms of biological role, involved in the gluconeogenesis. Catalyzes stereospecifically the conversion of dihydroxyacetone phosphate (DHAP) to D-glyceraldehyde-3-phosphate (G3P). The sequence is that of Triosephosphate isomerase from Chloroherpeton thalassium (strain ATCC 35110 / GB-78).